The following is a 203-amino-acid chain: Small ribosomal subunit protein uS4 (203 aa).

An S4 RNA-binding domain is found at 93–156 (RRLDNVVYRL…IKVPAILEAV (64 aa)).

Belongs to the universal ribosomal protein uS4 family. In terms of assembly, part of the 30S ribosomal subunit. Contacts protein S5. The interaction surface between S4 and S5 is involved in control of translational fidelity.

Its function is as follows. One of the primary rRNA binding proteins, it binds directly to 16S rRNA where it nucleates assembly of the body of the 30S subunit. Functionally, with S5 and S12 plays an important role in translational accuracy. The sequence is that of Small ribosomal subunit protein uS4 from Streptococcus suis (strain 98HAH33).